We begin with the raw amino-acid sequence, 154 residues long: 6,7-dimethyl-8-ribityllumazine synthase (154 aa).

Residues F26, 60–62 (ALE), and 84–86 (CII) contribute to the 5-amino-6-(D-ribitylamino)uracil site. (2S)-2-hydroxy-3-oxobutyl phosphate is bound at residue 89 to 90 (ET). Catalysis depends on H92, which acts as the Proton donor. A 5-amino-6-(D-ribitylamino)uracil-binding site is contributed by N117. (2S)-2-hydroxy-3-oxobutyl phosphate is bound at residue R131.

The protein belongs to the DMRL synthase family.

The catalysed reaction is (2S)-2-hydroxy-3-oxobutyl phosphate + 5-amino-6-(D-ribitylamino)uracil = 6,7-dimethyl-8-(1-D-ribityl)lumazine + phosphate + 2 H2O + H(+). The protein operates within cofactor biosynthesis; riboflavin biosynthesis; riboflavin from 2-hydroxy-3-oxobutyl phosphate and 5-amino-6-(D-ribitylamino)uracil: step 1/2. Its function is as follows. Catalyzes the formation of 6,7-dimethyl-8-ribityllumazine by condensation of 5-amino-6-(D-ribitylamino)uracil with 3,4-dihydroxy-2-butanone 4-phosphate. This is the penultimate step in the biosynthesis of riboflavin. The protein is 6,7-dimethyl-8-ribityllumazine synthase of Leptothrix cholodnii (strain ATCC 51168 / LMG 8142 / SP-6) (Leptothrix discophora (strain SP-6)).